A 151-amino-acid polypeptide reads, in one-letter code: Non-specific lipid transfer protein GPI-anchored 30 (151 aa).

A signal peptide spans 1 to 22; that stretch reads MMMGMKFFSFYVVLLLVAASSG. Disulfide bonds link cysteine 32–cysteine 69, cysteine 39–cysteine 53, cysteine 54–cysteine 97, and cysteine 67–cysteine 106. N-linked (GlcNAc...) asparagine glycosylation occurs at asparagine 44. Serine 120 is lipidated: GPI-anchor amidated serine. A propeptide spans 121-151 (removed in mature form); sequence SSIGNTFSQSYWMTTLAIAATVLSYCHHIIS.

Belongs to the plant LTP family. As to expression, expressed in vascular tissues of all organs. Expressed in seedlings, preferentially in hypocotyls and roots. Also observed in siliques.

It localises to the cell membrane. In terms of biological role, lipid transfer protein that promotes the number of phloem (pro)cambial and pericycle cells. The polypeptide is Non-specific lipid transfer protein GPI-anchored 30 (Arabidopsis thaliana (Mouse-ear cress)).